Reading from the N-terminus, the 1039-residue chain is Beta-galactosidase (1039 aa).

Substrate is bound by residues N103 and D201. D201 contacts Na(+). Residues E415, H417, and E460 each contribute to the Mg(2+) site. Substrate contacts are provided by residues E460 and 536-539 (EYAH). E460 serves as the catalytic Proton donor. The active-site Nucleophile is the E536. N596 provides a ligand contact to Mg(2+). The Na(+) site is built by F600 and N603. Residues N603 and W1012 each coordinate substrate.

Belongs to the glycosyl hydrolase 2 family. Homotetramer. It depends on Mg(2+) as a cofactor. Na(+) is required as a cofactor.

The enzyme catalyses Hydrolysis of terminal non-reducing beta-D-galactose residues in beta-D-galactosides.. With respect to regulation, inhibited by zinc, copper and nickel ions. Activated by 2-mercaptoethanol and inhibited by EDTA in vitro. In Pseudoalteromonas haloplanktis (Alteromonas haloplanktis), this protein is Beta-galactosidase (lacZ).